The sequence spans 537 residues: MDIFRILSRGAALKRSSNSDPGVKSESQNATKDKQNSLLRQVEKETDFFNTRKHTEVTKDIEDEAQDEAVPPPKITTEEDAAKLRKQNKVNVSGTDIPLPIGSFEDLIARCNLNRKLLANLIASGYSEPTAIQCEAIPASAEGRDLIACAPTGSGKTLAYLIPMAQALISSPKTKNYGIRGVVIAPTNELAIQIYQTLAPMCRGSNLNVTLLSKQVASKISSSIISANKFDVLICTPLRLIDLVKKEQVDLSKVEHLVIDEADKLFDHGFVEQTDEILSHCTLPTRRTSMFSATIPSGVEEMANSIMKDQIRIIVGHKEGASTSIDQKLVFTGNEEGKLLAIRQMVQQGEFKPPIIIFLQSIPRAKALFHELIYDKLNVEVIHAERTPKQREEAIRRFKNGDAWVLITTDVLARGVDFKGVNLVINYDVPQTSQAYVHRIGRTGRGGKEGKAVTFFTKEDKLAIKPVLNVMKQSGCHEGYSEWMESMEKLTKKEKQQIKQHEIKRKKISTVPQVVSKKRKQRKEMIEASKRRKEETK.

The disordered stretch occupies residues 14–51 (KRSSNSDPGVKSESQNATKDKQNSLLRQVEKETDFFNT). A compositionally biased stretch (polar residues) spans 15–30 (RSSNSDPGVKSESQNA). A compositionally biased stretch (basic and acidic residues) spans 31–47 (TKDKQNSLLRQVEKETD). Residues 106-134 (DLIARCNLNRKLLANLIASGYSEPTAIQC) carry the Q motif motif. The Helicase ATP-binding domain maps to 137–313 (IPASAEGRDL…NSIMKDQIRI (177 aa)). Position 150–157 (150–157 (APTGSGKT)) interacts with ATP. The DEAD box motif lies at 260–263 (DEAD). The 165-residue stretch at 324–488 (SIDQKLVFTG…GYSEWMESME (165 aa)) folds into the Helicase C-terminal domain. The tract at residues 512-537 (PQVVSKKRKQRKEMIEASKRRKEETK) is disordered. A compositionally biased stretch (basic and acidic residues) spans 523–537 (KEMIEASKRRKEETK).

The protein belongs to the DEAD box helicase family. DDX52/ROK1 subfamily. As to quaternary structure, interacts with the U3 snoRNA and is associated with the 90S and 40S pre-ribosomes.

Its subcellular location is the nucleus. The protein resides in the nucleolus. It catalyses the reaction ATP + H2O = ADP + phosphate + H(+). ATP-dependent RNA helicase involved in 40S ribosomal subunit biogenesis. Required for the processing and cleavage of 35S pre-rRNA at sites A0, A1, and A2, leading to mature 18S rRNA. The polypeptide is ATP-dependent RNA helicase ROK1 (ROK1) (Meyerozyma guilliermondii (strain ATCC 6260 / CBS 566 / DSM 6381 / JCM 1539 / NBRC 10279 / NRRL Y-324) (Yeast)).